The primary structure comprises 85 residues: Antifungal protein (85 aa).

The first 18 residues, 1–18, serve as a signal peptide directing secretion; sequence MVKLFVIVILALIAVAFG. 2 consecutive repeat copies span residues 19–25 and 67–73. The 2 X 7 AA repeats of Q-H-G-H-G-G-Q stretch occupies residues 19 to 73; that stretch reads QHGHGGQDQHGYGHGQQAVYGKGHEGHGVNNLGQDGHGQHGYAHGHSDQHGHGGQ. Positions 22–32 are enriched in gly residues; that stretch reads HGGQDQHGYGH. The disordered stretch occupies residues 22–85; that stretch reads HGGQDQHGYG…QHDGYKNRGY (64 aa). The span at 63–85 shows a compositional bias: basic and acidic residues; that stretch reads GHSDQHGHGGQHGQHDGYKNRGY.

Homodimer. Post-translationally, the N-terminus is blocked. Hemolymph.

This protein inhibits the growth of a variety of fungal species. The antifungal activity of this protein is enhanced by the presence of sarcotoxin IA. This is Antifungal protein from Sarcophaga peregrina (Flesh fly).